Consider the following 71-residue polypeptide: Large ribosomal subunit protein uL29 (71 aa).

This sequence belongs to the universal ribosomal protein uL29 family.

The chain is Large ribosomal subunit protein uL29 from Methanococcus maripaludis (strain C7 / ATCC BAA-1331).